The chain runs to 525 residues: MSCQLLPVLLLLLLRASCPWGHEQGPRSPSEEPPEEEIPKEDGILVLSRHTLGLALREHPALLVEFYAPWCGHCQALAPEYSKAAAVLAAESSVVMLAKVDGPAQPELAEEFGVTEYPTLKFFRDGNRTHPEEYTGPREAEGIAEWLRRRVGPSAMRLEDEAAAQALIDGRDLVVIGFFQDLHDEDVATFLALAQDALDMTFGLTDRPQLFQQFGLTKDTVVLFKKFDEGRADFPVDEELGLDLGDLSRFLVTHSMRLVTEFNSQTSAKIFAARILNHLLLFVNQTLAAHRELLVGFGEAAPHFRGQVLFVVVDVAADNEHVLQYFGLKAEAAPTLRLVNLETTKKYAPVDGGPVTTASITAFCHAVLNGQVKPYLLSQEVPPDWDQRPVKTLVGKNFEQVAFDETKNVFVKFYAPWCTHCKEMAPAWEALAEKYQDHEDVIIAELDATANELDAFAVHGFPTLKYFPAGPGRKVIEYKSTRDLGTFSKFLDNGGVLPTEEPLEEPAAPFPEPPANSTMGSKEEL.

Positions 1–21 (MSCQLLPVLLLLLLRASCPWG) are cleaved as a signal peptide. Residues 27-152 (RSPSEEPPEE…IAEWLRRRVG (126 aa)) form the Thioredoxin 1 domain. Residues Cys-71 and Cys-74 each act as nucleophile in the active site. An intrachain disulfide couples Cys-71 to Cys-74. N-linked (GlcNAc...) asparagine glycans are attached at residues Asn-127 and Asn-284. The region spanning 367–496 (VLNGQVKPYL…FSKFLDNGGV (130 aa)) is the Thioredoxin 2 domain. Catalysis depends on nucleophile residues Cys-418 and Cys-421. A disulfide bridge links Cys-418 with Cys-421. The tract at residues 498 to 525 (PTEEPLEEPAAPFPEPPANSTMGSKEEL) is disordered. Asn-516 is a glycosylation site (N-linked (GlcNAc...) asparagine). Over residues 516 to 525 (NSTMGSKEEL) the composition is skewed to polar residues. A Prevents secretion from ER motif is present at residues 522–525 (KEEL).

The protein belongs to the protein disulfide isomerase family. In terms of assembly, monomer; predominantly as monomer under reducing conditions. Homodimer; disulfide-linked. Part of a large chaperone multiprotein complex comprising DNAJB11, HSP90B1, HSPA5, HYOU, PDIA2, PDIA4, PDIA6, PPIB, SDF2L1, UGGT1 and very small amounts of ERP29, but not, or at very low levels, CALR nor CANX. Post-translationally, the disulfide-linked homodimer exhibits an enhanced chaperone activity. In terms of processing, glycosylated.

The protein localises to the endoplasmic reticulum lumen. The catalysed reaction is Catalyzes the rearrangement of -S-S- bonds in proteins.. In terms of biological role, acts as an intracellular estrogen-binding protein. May be involved in modulating cellular levels and biological functions of estrogens in the pancreas. May act as a chaperone that inhibits aggregation of misfolded proteins. In Pongo abelii (Sumatran orangutan), this protein is Protein disulfide-isomerase A2 (PDIA2).